Consider the following 145-residue polypeptide: Large ribosomal subunit protein uL24 (145 aa).

The tract at residues 108-145 is disordered; sequence EPIQEEQQKTEETKQEIAPEEVEAKEAQDKQEVKENDQ. Basic and acidic residues predominate over residues 113-145; sequence EQQKTEETKQEIAPEEVEAKEAQDKQEVKENDQ.

It belongs to the universal ribosomal protein uL24 family. As to quaternary structure, part of the 50S ribosomal subunit.

In terms of biological role, one of two assembly initiator proteins, it binds directly to the 5'-end of the 23S rRNA, where it nucleates assembly of the 50S subunit. Located at the polypeptide exit tunnel on the outside of the subunit. This Thermoplasma volcanium (strain ATCC 51530 / DSM 4299 / JCM 9571 / NBRC 15438 / GSS1) protein is Large ribosomal subunit protein uL24 (rpl24).